Here is an 805-residue protein sequence, read N- to C-terminus: Zinc finger CCCH domain-containing protein 11B (805 aa).

C3H1-type zinc fingers lie at residues 2-29 (PNQGEDCYFFFYSTCTKGDSCPFRHCEA) and 31-57 (LGNETVCTLWQEGRCFRRVCRFRHMEI). Disordered regions lie at residues 140 to 194 (KVES…GLRV), 223 to 351 (KKMK…DKVN), 364 to 433 (MLLE…TCIK), 449 to 468 (IVASKGQSEEPAGKTKSMQE), 481 to 506 (KALRVQQSSESSTSSPSQHEATPGAR), and 715 to 805 (VTVP…PLEL). The segment covering 160-175 (ADDDEDDDDQFSEEGD) has biased composition (acidic residues). Basic and acidic residues predominate over residues 364 to 390 (MLLERASQKHGESQTKLKTEGPSKTDD). A compositionally biased stretch (polar residues) spans 391-402 (STSGARSSSTIR). Residues 403–423 (IKTFSEVLAEEEHRQQEAERQ) are a coiled coil. Composition is skewed to basic and acidic residues over residues 412-433 (EEEHRQQEAERQKSKKDTTCIK) and 455-468 (QSEEPAGKTKSMQE). 2 stretches are compositionally biased toward low complexity: residues 486–498 (QQSSESSTSSPSQ) and 730–749 (PPTQSSSDSSPPEVSGPSSS). Residues 750–763 (QMSMKTRRLSSAST) show a composition bias toward polar residues. A compositionally biased stretch (acidic residues) spans 789 to 805 (EIDLDPGKDEDDLPLEL).

Functionally, may play a role in mRNA transport. The polypeptide is Zinc finger CCCH domain-containing protein 11B (Homo sapiens (Human)).